We begin with the raw amino-acid sequence, 429 residues long: Adenosylmethionine-8-amino-7-oxononanoate aminotransferase (429 aa).

Trp-52 is a substrate binding site. 112–113 (GS) provides a ligand contact to pyridoxal 5'-phosphate. Tyr-144 provides a ligand contact to substrate. Residue Asp-245 coordinates pyridoxal 5'-phosphate. The substrate site is built by Lys-274 and Gly-307. N6-(pyridoxal phosphate)lysine is present on Lys-274. 308 to 309 (PT) serves as a coordination point for pyridoxal 5'-phosphate. Residue Arg-391 participates in substrate binding.

The protein belongs to the class-III pyridoxal-phosphate-dependent aminotransferase family. BioA subfamily. As to quaternary structure, homodimer. Pyridoxal 5'-phosphate serves as cofactor.

Its subcellular location is the cytoplasm. It carries out the reaction (8S)-8-amino-7-oxononanoate + S-adenosyl-L-methionine = S-adenosyl-4-methylsulfanyl-2-oxobutanoate + (7R,8S)-7,8-diammoniononanoate. It functions in the pathway cofactor biosynthesis; biotin biosynthesis; 7,8-diaminononanoate from 8-amino-7-oxononanoate (SAM route): step 1/1. Catalyzes the transfer of the alpha-amino group from S-adenosyl-L-methionine (SAM) to 7-keto-8-aminopelargonic acid (KAPA) to form 7,8-diaminopelargonic acid (DAPA). It is the only aminotransferase known to utilize SAM as an amino donor. In Buchnera aphidicola subsp. Baizongia pistaciae (strain Bp), this protein is Adenosylmethionine-8-amino-7-oxononanoate aminotransferase.